The following is a 161-amino-acid chain: Phosphohistidine phosphatase SixA (161 aa).

Belongs to the SixA phosphatase family.

Its function is as follows. Exhibits phosphohistidine phosphatase activity towards the HPt domain of the ArcB sensor involved in the multistep His-Asp phosphorelay. This chain is Phosphohistidine phosphatase SixA (sixA), found in Escherichia coli (strain K12).